Consider the following 108-residue polypeptide: Circadian clock oscillator protein KaiB (108 aa).

It belongs to the KaiB family. In terms of assembly, homodimer, interacts with KaiC. The KaiABC complex composition changes during the circadian cycle to control KaiC phosphorylation. Complexes KaiC(6), KaiA(2-4):KaiC(6), KaiB(6):KaiC(6) and KaiC(6):KaiB(6):KaiA(12) are among the most important forms, many form cooperatively. Undergoes a major conformational rearrangment; in the free state forms homotetramers as a dimer of dimers. When bound to the CI domain of KaiC switches to a monomeric thioredoxin-fold (KaiB(fs)). KaiB(fs) binds CikA, leading it to dephosphorylate phospho-RpaA.

In terms of biological role, key component of the KaiABC oscillator complex, which constitutes the main circadian regulator in cyanobacteria. Complex composition changes during the circadian cycle to control KaiC phosphorylation. KaiA stimulates KaiC autophosphorylation, while KaiB sequesters KaiA, leading to KaiC autodephosphorylation. Phospho-Ser-431 KaiC accumulation triggers binding of KaiB to form the KaiB(6):KaiC(6) complex, leading to changes in output regulators CikA and SasA. KaiB switches to a thioredoxin-like fold (KaiB(fs)) when bound to KaiC. KaiB(6):KaiC(6) formation exposes a site for KaiA binding that sequesters KaiA from KaiC, making the KaiC(6):KaiB(6):KaiA(12) complex that results in KaiC autodephosphorylation. Its function is as follows. A metamorphic protein which reversibly switches between an inactive tetrameric fold and a rare, thioredoxin-like monomeric fold (KaiB(fs)). KaiB(fs) binds phospho-KaiC, KaiA and CikA. KaiA and CikA compete for binding to KaiB(fs), and KaiB(fs) and SasA compete for binding to KaiC, thus the clock oscillator and output signal pathway are tightly coupled. The polypeptide is Circadian clock oscillator protein KaiB (Nostoc sp. (strain PCC 7120 / SAG 25.82 / UTEX 2576)).